The sequence spans 324 residues: ATP phosphoribosyltransferase regulatory subunit (324 aa).

The protein belongs to the class-II aminoacyl-tRNA synthetase family. HisZ subfamily. In terms of assembly, heteromultimer composed of HisG and HisZ subunits.

It is found in the cytoplasm. The protein operates within amino-acid biosynthesis; L-histidine biosynthesis; L-histidine from 5-phospho-alpha-D-ribose 1-diphosphate: step 1/9. In terms of biological role, required for the first step of histidine biosynthesis. May allow the feedback regulation of ATP phosphoribosyltransferase activity by histidine. This Carboxydothermus hydrogenoformans (strain ATCC BAA-161 / DSM 6008 / Z-2901) protein is ATP phosphoribosyltransferase regulatory subunit.